Here is a 240-residue protein sequence, read N- to C-terminus: MGRGKIAIKRINNSTSRQVTFSKRRNGLLKKAKELAILCDAEVGVIIFSSTGRLYDFSSSSMKSVIERYSDAKGETSSENDPASEIQFWQKEAAILKRQLHNLQENHRQMMGEELSGLSVEALQNLENQLELSLRGVRMKKDQMLIEEIQVLNREGNLVHQENLDLHKKVNLMHQQNMELHEKVSEVEGVKIANKNSLLTNGLDMRDTSNEHVHLQLSQPQHDHETHSKAIQLNYFSFIA.

In terms of domain architecture, MADS-box spans 1–61 (MGRGKIAIKR…GRLYDFSSSS (61 aa)). Residues 86–176 (IQFWQKEAAI…HKKVNLMHQQ (91 aa)) form the K-box domain.

In terms of assembly, homodimer. Interacts with AGL15, AGL24, AP1, AGL6, AG, AGL1, AGL11, AGL5, SEP3, SEP1, AGL63, AGL14, SOC1 and AGL21. Interacts with AGL63. Interacts with SVP. Expressed at high levels in leaves, moderate levels in roots, seedlings and stems, and at low levels in flowers, pollen and siliques. Accumulates in leaf guard cells and trichomes. Also present in epidermal cells of roots. Expressed in mature guard cells.

The protein resides in the nucleus. Probable transcription factor involved in the regulation of flowering time in long-day photoperiod. Participates in the repression of FT expression and floral transition, by interacting closely with the FLC-SVP pathways. Functions in the satellite meristemoid lineage of stomatal development. This chain is Agamous-like MADS-box protein AGL16 (AGL16), found in Arabidopsis thaliana (Mouse-ear cress).